The primary structure comprises 305 residues: Glutaminase (305 aa).

Serine 61, asparagine 113, glutamate 158, asparagine 165, tyrosine 189, tyrosine 241, and valine 259 together coordinate substrate.

This sequence belongs to the glutaminase family. In terms of assembly, homotetramer.

It catalyses the reaction L-glutamine + H2O = L-glutamate + NH4(+). In Clostridium botulinum (strain Kyoto / Type A2), this protein is Glutaminase.